A 940-amino-acid chain; its full sequence is Isoleucine--tRNA ligase (940 aa).

The 'HIGH' region signature appears at 59 to 69 (PYANGDIHIGH). L-isoleucyl-5'-AMP is bound at residue E563. A 'KMSKS' region motif is present at residues 604–608 (KMSKS). K607 provides a ligand contact to ATP. Residues C903, C906, C923, and C926 each contribute to the Zn(2+) site.

Belongs to the class-I aminoacyl-tRNA synthetase family. IleS type 1 subfamily. In terms of assembly, monomer. Zn(2+) serves as cofactor.

It localises to the cytoplasm. It carries out the reaction tRNA(Ile) + L-isoleucine + ATP = L-isoleucyl-tRNA(Ile) + AMP + diphosphate. In terms of biological role, catalyzes the attachment of isoleucine to tRNA(Ile). As IleRS can inadvertently accommodate and process structurally similar amino acids such as valine, to avoid such errors it has two additional distinct tRNA(Ile)-dependent editing activities. One activity is designated as 'pretransfer' editing and involves the hydrolysis of activated Val-AMP. The other activity is designated 'posttransfer' editing and involves deacylation of mischarged Val-tRNA(Ile). In Wigglesworthia glossinidia brevipalpis, this protein is Isoleucine--tRNA ligase.